The primary structure comprises 173 residues: uncharacterized protein (173 aa).

Positions 4 to 173 constitute an N-acetyltransferase domain; that stretch reads VKIVQVSEKD…TDFLLKKALV (170 aa). Residues 97 to 99, 106 to 110, and 136 to 138 each bind acetyl-CoA; these read IYL, RGLGK, and NEN.

This is an uncharacterized protein from Lactobacillus delbrueckii subsp. lactis.